We begin with the raw amino-acid sequence, 1534 residues long: MSSDLISQAESISNIEILRALFITDTHTTVGDVAVPSAEPGVEHDQISPGESDEEIEENISDQNNSSSQKRLQNAQFEALLTRRAEDTSNENIDRVPLNLSDNELSIAHLVAKQDVGGGLLDPREYQIELFERAKAQNTIAVLDTGSGKTLIAVLLLRHVLQNELNDRANGKPHRVSFFLVDSVTLAYQQAAVLRNNIDQNVAHFFGAMGTDLWDRQVWEEHLQQNMVIVCTAEILNQCLLNSHVRMNQINLLIFDEAHHTKKDHPYARIIRDSYFKASPPQRPRIFGMTASPIDTKGDIIAAATRLETLLDSRIATTSKITLLRQVVSRPIEKVWAYDRLESPFKTNLHKLMENRFGNVKALEGVFRFAWYASSELGRWCSDRAWLYALADDVLPKLEGHVNKLAESTAAATERDMAFKEITLIKEASNIVKAHTFNDPEFPGELSPKVRLLQTELSKHFSHAPETKCIIFTQKRYTAKTLHELFTILSIPHLRPGVLIGVRSGDIGGMNITFRQQFLALVKFRKGEINCLFATSVAEEGLDIPDCNLVVRFDLYHTLIQYVQSRGRARHYHSTYASMVEKDNSDHEARLREVREAEKTMQNFCETLPEDRILHGNDHDLDSLLQHEEGRRTFTVKSTGARLTYHSAIAILARYASSLQYEKETTPQATYVVQSVGNTYVCEVILPEKSPIRGLTGSPAIRKSIAKQSAAFDTCLLLRRHKLLDDFFKSIYHKRLPAMRNAKLAITSKKTNQYDMLLKPSIWRRHQGILPSKLYGTILSLLPSEPLSREHQPILVLTREKLPDFPAFPIYLDEDIETKVVPRSLDTGMELSAEELRALTTFTLRIFRDVFHKVYEQESEKLPYWLAPAEPLDANGREPGPRGIIDWKTVTFVQENDEIVFSRDLAPESLVNRFMFDKWDGRSRFFTIKVMEGLRAADPPPSSVPRRRHMDNIMSYCLSLSKNSRARFLAGCHWDQPVLQAELVRLRRNLLDKLTTEEKKIQTECFICAEPLKISAIPPSIASTCLAFPAIITRLDSYLISIEACDELDLVIRSDYALEAVTKDSDNTEEHRGQQIHFQRGMGKNYERLEFLGDCFLKMATSIALFTQNPDDDEFDYHVNRMCLICNKNLFNTAKKRQIYRYIRSRSFSRHVWYPDGLTLLQGKDHSKKMLSQAKHALGEKTIADVCEALIGACLLSGGPEHRFDMGVKAVSVFVDSPSHAVSRWKEYIGLYKPPNYQVRKAEGAETNLALQVEEKLGYHFRYPRLLCSAVTHPSTPSTWYFRVPCYQRLEFLGDSLLDMVCVEDLFHRFPDRDPQWLTEHKMAMVSNKFLGALAVKLGFHKHIKAFSNPLQAQITYYVEEIETAEAESEGAVDYWVVAKDPPKCLPDMVEAYLGAIFVDSDFSFEVIEAFFQAQIKPYFQDMSIYDTFANKHPTTFLHNRLANEFGCTNYCLKAGEMPAIDGMPAGVLAAVIVHNSVVSEATASSSRYAKIRASERALVVLDGLLPYEFRQRYNCNCQVVGNPASAPDIGTAI.

Positions proline 36–lysine 70 are disordered. The segment covering glutamate 51–isoleucine 60 has biased composition (acidic residues). The region spanning leucine 130 to leucine 311 is the Helicase ATP-binding domain. Leucine 143 to threonine 150 is an ATP binding site. Residues aspartate 256–histidine 259 carry the DEAH box motif. The Helicase C-terminal domain occupies glutamate 456–isoleucine 613. The 91-residue stretch at alanine 648–alanine 738 folds into the Dicer dsRNA-binding fold domain. A PAZ domain is found at lysine 888–alanine 1016. RNase III domains follow at residues serine 1054–glycine 1199 and alanine 1250–aspartate 1402. Positions 1291, 1388, and 1391 each coordinate Mg(2+). The 69-residue stretch at threonine 1436–glycine 1504 folds into the DRBM domain. Residues cysteine 1448, histidine 1475, cysteine 1516, and cysteine 1518 each coordinate Zn(2+).

It belongs to the helicase family. Dicer subfamily. Mg(2+) is required as a cofactor. Requires Mn(2+) as cofactor.

In terms of biological role, dicer-like endonuclease involved in cleaving double-stranded RNA in the RNA interference (RNAi) pathway. Produces 21 to 25 bp dsRNAs (siRNAs) which target the selective destruction of homologous RNAs leading to sequence-specific suppression of gene expression, called post-transcriptional gene silencing (PTGS). Part of a broad host defense response against viral infection and transposons. The protein is Dicer-like protein 1 (dcl1) of Aspergillus clavatus (strain ATCC 1007 / CBS 513.65 / DSM 816 / NCTC 3887 / NRRL 1 / QM 1276 / 107).